Here is a 339-residue protein sequence, read N- to C-terminus: Lipoate-protein ligase A (339 aa).

The region spanning 28 to 211 is the BPL/LPL catalytic domain; sequence NPDSHTLFLW…AFREYYRDTD (184 aa). ATP is bound by residues arginine 70, 75–78, and lysine 129; that span reads GAVF. (R)-lipoate is bound at residue lysine 129.

It belongs to the LplA family. In terms of assembly, monomer.

The protein resides in the cytoplasm. It catalyses the reaction L-lysyl-[lipoyl-carrier protein] + (R)-lipoate + ATP = N(6)-[(R)-lipoyl]-L-lysyl-[lipoyl-carrier protein] + AMP + diphosphate + H(+). The protein operates within protein modification; protein lipoylation via exogenous pathway; protein N(6)-(lipoyl)lysine from lipoate: step 1/2. It participates in protein modification; protein lipoylation via exogenous pathway; protein N(6)-(lipoyl)lysine from lipoate: step 2/2. Functionally, catalyzes both the ATP-dependent activation of exogenously supplied lipoate to lipoyl-AMP and the transfer of the activated lipoyl onto the lipoyl domains of lipoate-dependent enzymes. In Psychrobacter cryohalolentis (strain ATCC BAA-1226 / DSM 17306 / VKM B-2378 / K5), this protein is Lipoate-protein ligase A.